We begin with the raw amino-acid sequence, 796 residues long: Protocadherin beta-3 (796 aa).

The signal sequence occupies residues 1-26 (MEAGGERFLRQRQVLLLFVFLGGSLA). At 27 to 690 (GSESRRYSVA…AQADLLTVYL (664 aa)) the chain is on the extracellular side. Cadherin domains are found at residues 35-133 (VAEE…SPVF), 138-242 (MHLK…APEF), 247-347 (YEVA…PPEL), 352-451 (VNSP…APAF), and 456-561 (YTLF…SPFV). A glycan (N-linked (GlcNAc...) asparagine) is linked at Asn169. 2 N-linked (GlcNAc...) asparagine glycosylation sites follow: Asn418 and Asn436. Asn567 carries N-linked (GlcNAc...) asparagine glycosylation. A Cadherin 6 domain is found at 568–671 (GSAPCTELVP…LVDGFSQPYL (104 aa)). The chain crosses the membrane as a helical span at residues 691–711 (VVALASVSSLFLFSVLLFVAV). At 712–796 (RLCRRSRAAS…PSFRKSFEFS (85 aa)) the chain is on the cytoplasmic side.

The protein resides in the cell membrane. Its function is as follows. Potential calcium-dependent cell-adhesion protein. May be involved in the establishment and maintenance of specific neuronal connections in the brain. In Pan troglodytes (Chimpanzee), this protein is Protocadherin beta-3 (PCDHB3).